A 464-amino-acid chain; its full sequence is Dolichyl-diphosphooligosaccharide--protein glycosyltransferase subunit 1B (464 aa).

Positions 1–24 are cleaved as a signal peptide; sequence MAARIGIFSVFVAVLLSISAFSSA. Over 25–436 the chain is Lumenal; that stretch reads QDLQIVNAER…TFKPIYMLAE (412 aa). Asparagine 106 and asparagine 298 each carry an N-linked (GlcNAc...) asparagine glycan. Lysine 310 participates in a covalent cross-link: Glycyl lysine isopeptide (Lys-Gly) (interchain with G-Cter in ubiquitin). Asparagine 352 carries N-linked (GlcNAc...) asparagine glycosylation. The helical transmembrane segment at 437–457 threads the bilayer; the sequence is PFMLVSAFFLVFVASLAYVHI. Over 458-464 the chain is Cytoplasmic; that stretch reads DLNIVRK.

It belongs to the OST1 family. Component of the oligosaccharyltransferase (OST) complex.

The protein resides in the endoplasmic reticulum membrane. Its pathway is protein modification; protein glycosylation. Subunit of the oligosaccharyl transferase (OST) complex that catalyzes the initial transfer of a defined glycan (Glc(3)Man(9)GlcNAc(2) in eukaryotes) from the lipid carrier dolichol-pyrophosphate to an asparagine residue within an Asn-X-Ser/Thr consensus motif in nascent polypeptide chains, the first step in protein N-glycosylation. N-glycosylation occurs cotranslationally and the complex associates with the Sec61 complex at the channel-forming translocon complex that mediates protein translocation across the endoplasmic reticulum (ER). All subunits are required for a maximal enzyme activity. The sequence is that of Dolichyl-diphosphooligosaccharide--protein glycosyltransferase subunit 1B (OST1B) from Arabidopsis thaliana (Mouse-ear cress).